A 689-amino-acid chain; its full sequence is MAQTEKKAGLLRRTSSSKKPLKEKVVLMYDEIFMKEDPTKNSPRFWDELFLMKVNLEYLEGKLESLDGDEFMKIKDNINSLFHHCVQALAEEHQIKVVNALQTLCALFRGVHQKNKSATGFDIINMLIGFDKAELRMKELMESLDSLLCGDGSESLKSLCLKLLLCLVTVTDNISQNTILEYVMINSIFEAILQILSDVSSRSQHGYDSVVLLALLVNYRKYESVNPYIVKLSIVDDEPTLDGLGMVIHHALTEYNRQYKEKEEENQGGFFSTLSSMVGSMFIADADEKLSVQTNEAILLALYEAVHLNRNFITVLAQSHPEIDMAATPATPVPASPTTPLGTTPPSLDLMNNPELPLDPNLQTSNLLITFLKYSSIVMQDTKDEHRLNSARLCLIILTCIAEDQYADAFLHDDNMNFRVNLHRMPMRHRKKAADKNIPCRPLVCAVLDLMVEFVVTHMMKEFPMDLYVRCVQIIHKLICYQKKCRVRLHYTWRELWSALINLLKFLLSNETGLLAKHNIFQLALQVVNLFNMFITYGDTFLPTPSSYDELYYEIIRMHQVFDNLYCMVLRVSTNAGQWKEPASKVTHALVNVRAIINHFNPKIESYAAVNHISQLSEDQVLEVVRSNYDTLTLKLQDGLDQFERYSEQPREAGFFKELVRSISLNVRKNVSLTTMSQDVLLKEFSSIS.

A helical membrane pass occupies residues 520–538 (IFQLALQVVNLFNMFITYG).

The protein belongs to the ARMH3 family.

It is found in the golgi apparatus membrane. The protein localises to the cytoplasm. Functionally, may be involved in Golgi maintenance and protein secretion. In Danio rerio (Zebrafish), this protein is Armadillo-like helical domain-containing protein 3.